The following is a 1610-amino-acid chain: Protein TASOR (1610 aa).

The disordered stretch occupies residues 1–96; the sequence is MATAAETEAP…PERPFRRSFQ (96 aa). A2 is subject to N-acetylalanine. Positions 41–51 are enriched in gly residues; that stretch reads NGGGDGGGGAG. The span at 52 to 61 shows a compositional bias: low complexity; that stretch reads PEETAAAEAA. The residue at position 339 (S339) is a Phosphoserine. K581 participates in a covalent cross-link: Glycyl lysine isopeptide (Lys-Gly) (interchain with G-Cter in SUMO2). Phosphoserine occurs at positions 628, 631, and 668. 2 disordered regions span residues 631–671 and 687–710; these read SDYE…SLDY and KKNV…RKLE. 2 stretches are compositionally biased toward basic and acidic residues: residues 652 to 671 and 697 to 710; these read NSRD…SLDY and EDTK…RKLE. Residue S793 is modified to Phosphoserine. Residues K816 and K825 each participate in a glycyl lysine isopeptide (Lys-Gly) (interchain with G-Cter in SUMO2) cross-link. S836 is subject to Phosphoserine. K866 is covalently cross-linked (Glycyl lysine isopeptide (Lys-Gly) (interchain with G-Cter in SUMO2)). A disordered region spans residues 915 to 941; sequence TGGNAGSPEDQHGKHGEKQTPDTLKGT. Phosphoserine is present on residues S921 and K928. Residues 923–934 are compositionally biased toward basic and acidic residues; that stretch reads EDQHGKHGEKQT. The residue at position 1004 (T1004) is a Phosphothreonine. Phosphoserine occurs at positions 1059 and 1508.

It belongs to the TASOR family. In terms of assembly, component of the HUSH complex; at least composed of TASOR, PPHLN1 and MPHOSPH8. Interacts with MORC2; the interaction associateS MORC2 with the HUSH complex which recruits MORC2 to heterochromatic loci. Interacts with ZNF638; leading to recruitment of the HUSH complex to unintegrated retroviral DNA. Interacts with INPP5A, EML1, SV1L, GPSM2, ITGB3BP, CNTN1, ETFA, PSMD8, S100A10, MPHOSPH8, TMEM100, ALB, PARPBP, HCFC2, NCBP1 and SETDB1. Present in skin, brain and testis (at protein level). Ubiquitously expressed at low levels in the majority of the organs, expressed at higher levels in kidneys, spleen, thymus, seminal vesicles, uterus, and ovaries and its expression is almost six times higher in male tissues than in females. Highly expressed in seminiferous tubules with a strong signal in Sertoli cells, spermatogonia, and spermatocytes.

The protein resides in the nucleus. It is found in the chromosome. Component of the HUSH complex, a multiprotein complex that mediates epigenetic repression. The HUSH complex is recruited to genomic loci rich in H3K9me3 and is required to maintain transcriptional silencing by promoting recruitment of SETDB1, a histone methyltransferase that mediates further deposition of H3K9me3, as well as MORC2. Also represses L1 retrotransposons in collaboration with MORC2 and, probably, SETDB1, the silencing is dependent of repressive epigenetic modifications, such as H3K9me3 mark. Silencing events often occur within introns of transcriptionally active genes, and lead to the down-regulation of host gene expression. The HUSH complex is also involved in the silencing of unintegrated retroviral DNA by being recruited by ZNF638: some part of the retroviral DNA formed immediately after infection remains unintegrated in the host genome and is transcriptionally repressed. Plays a crucial role in early embryonic development. Involved in the organization of spindle poles and spindle apparatus assembly during zygotic division. Plays an important role in maintaining epiblast fitness or potency. This is Protein TASOR from Mus musculus (Mouse).